Reading from the N-terminus, the 424-residue chain is Histone-binding protein RBBP7 (424 aa).

7 WD repeats span residues 47 to 121, 127 to 172, 180 to 216, 227 to 268, 274 to 311, 317 to 368, and 375 to 402; these read QWLP…KINH, RARY…LRLR, GLSW…KIVD, VVED…HSVD, VNCL…LHSF, EIFQ…LFIH, and ISDF…IWQM. Residues 359-404 form an interaction with HAT1 region; it reads DGPPELLFIHGGHTAKISDFSWNPNEPWVICSVSEDNIMQIWQMAE.

It belongs to the WD repeat RBAP46/RBAP48/MSI1 family. Binds directly to helix 1 of the histone fold of histone H4, a region that is not accessible when H4 is in chromatin. Also interacts with histone H2B and HAT1.

It localises to the nucleus. Functionally, core histone-binding subunit that may target chromatin remodeling factors, histone acetyltransferases and histone deacetylases to their histone substrates in a manner that is regulated by nucleosomal DNA. Component of several complexes which regulate chromatin metabolism. In Gallus gallus (Chicken), this protein is Histone-binding protein RBBP7 (RBBP7).